A 101-amino-acid polypeptide reads, in one-letter code: Large ribosomal subunit protein bL21 (101 aa).

Belongs to the bacterial ribosomal protein bL21 family. In terms of assembly, part of the 50S ribosomal subunit. Contacts protein L20.

In terms of biological role, this protein binds to 23S rRNA in the presence of protein L20. In Metamycoplasma arthritidis (strain 158L3-1) (Mycoplasma arthritidis), this protein is Large ribosomal subunit protein bL21.